The sequence spans 514 residues: 2,3-bisphosphoglycerate-independent phosphoglycerate mutase (514 aa).

2 residues coordinate Mn(2+): Asp14 and Ser64. Residue Ser64 is the Phosphoserine intermediate of the active site. Substrate-binding positions include His125, 155 to 156 (RD), Arg187, Arg193, 263 to 266 (RADR), and Lys336. 5 residues coordinate Mn(2+): Asp403, His407, Asp444, His445, and His463.

The protein belongs to the BPG-independent phosphoglycerate mutase family. Monomer. It depends on Mn(2+) as a cofactor.

The catalysed reaction is (2R)-2-phosphoglycerate = (2R)-3-phosphoglycerate. It participates in carbohydrate degradation; glycolysis; pyruvate from D-glyceraldehyde 3-phosphate: step 3/5. In terms of biological role, catalyzes the interconversion of 2-phosphoglycerate and 3-phosphoglycerate. The protein is 2,3-bisphosphoglycerate-independent phosphoglycerate mutase of Shewanella putrefaciens (strain CN-32 / ATCC BAA-453).